The following is a 418-amino-acid chain: Flavin-dependent L-tryptophan oxidase VioA (418 aa).

Mg(2+) is bound at residue Gly-13. FAD is bound at residue Ser-15. Residue Gly-16 coordinates Mg(2+). FAD-binding residues include Asp-38, Arg-46, and Arg-64. Positions 64 and 163 each coordinate substrate. An FAD-binding site is contributed by Leu-208. Ala-240 serves as a coordination point for Mg(2+). Substrate is bound at residue Tyr-309. Residue Met-398 coordinates FAD.

It belongs to the flavin monoamine oxidase family. As to quaternary structure, homodimer. The cofactor is FAD. It depends on Mg(2+) as a cofactor.

It catalyses the reaction L-tryptophan + O2 = 2-iminio-3-(indol-3-yl)propanoate + H2O2. The enzyme catalyses 7-chloro-L-tryptophan + O2 = 3-(7-chloroindol-3-yl)-2-iminopropanoate + H2O2. It functions in the pathway pigment biosynthesis; violacein biosynthesis. Functionally, the enzyme generates the imine form of indole 3-pyruvate (IPA) from L-tryptophan (L-Trp), with concomitant two-electron reduction of O(2) to H(2)O(2). The protein is Flavin-dependent L-tryptophan oxidase VioA (vioA) of Chromobacterium violaceum (strain ATCC 12472 / DSM 30191 / JCM 1249 / CCUG 213 / NBRC 12614 / NCIMB 9131 / NCTC 9757 / MK).